The following is a 787-amino-acid chain: Phenylalanine--tRNA ligase beta subunit (787 aa).

The tRNA-binding domain maps to 39 to 149 (APAFSGVVVA…EDAPVGTNIR (111 aa)). One can recognise a B5 domain in the interval 400-475 (PEAKQVGLRL…RVYGYENIPD (76 aa)). The Mg(2+) site is built by Asp-453, Asp-459, Glu-462, and Glu-463. One can recognise an FDX-ACB domain in the interval 694-786 (SKFQPVRRDL…VATEAGARLR (93 aa)).

The protein belongs to the phenylalanyl-tRNA synthetase beta subunit family. Type 1 subfamily. As to quaternary structure, tetramer of two alpha and two beta subunits. Requires Mg(2+) as cofactor.

Its subcellular location is the cytoplasm. The enzyme catalyses tRNA(Phe) + L-phenylalanine + ATP = L-phenylalanyl-tRNA(Phe) + AMP + diphosphate + H(+). The protein is Phenylalanine--tRNA ligase beta subunit of Neisseria gonorrhoeae (strain ATCC 700825 / FA 1090).